A 1162-amino-acid chain; its full sequence is DNA-directed RNA polymerase subunit beta 1 (1162 aa).

Belongs to the RNA polymerase beta chain family. In terms of assembly, the RNAP catalytic core consists of 2 alpha, 1 beta, 1 beta' and 1 omega subunit. When a sigma factor is associated with the core the holoenzyme is formed, which can initiate transcription.

The enzyme catalyses RNA(n) + a ribonucleoside 5'-triphosphate = RNA(n+1) + diphosphate. In terms of biological role, DNA-dependent RNA polymerase catalyzes the transcription of DNA into RNA using the four ribonucleoside triphosphates as substrates. The chain is DNA-directed RNA polymerase subunit beta 1 from Nocardia farcinica (strain IFM 10152).